The sequence spans 1224 residues: DNA-directed RNA polymerase subunit beta (1224 aa).

The protein belongs to the RNA polymerase beta chain family. The RNAP catalytic core consists of 2 alpha, 1 beta, 1 beta' and 1 omega subunit. When a sigma factor is associated with the core the holoenzyme is formed, which can initiate transcription.

It catalyses the reaction RNA(n) + a ribonucleoside 5'-triphosphate = RNA(n+1) + diphosphate. In terms of biological role, DNA-dependent RNA polymerase catalyzes the transcription of DNA into RNA using the four ribonucleoside triphosphates as substrates. This Pelotomaculum thermopropionicum (strain DSM 13744 / JCM 10971 / SI) protein is DNA-directed RNA polymerase subunit beta.